The following is a 122-amino-acid chain: UPF0145 protein Bmul_3577/BMULJ_04940 (122 aa).

Belongs to the UPF0145 family.

This Burkholderia multivorans (strain ATCC 17616 / 249) protein is UPF0145 protein Bmul_3577/BMULJ_04940.